Consider the following 323-residue polypeptide: Lipoyl synthase (323 aa).

7 residues coordinate [4Fe-4S] cluster: cysteine 69, cysteine 74, cysteine 80, cysteine 95, cysteine 99, cysteine 102, and serine 310. In terms of domain architecture, Radical SAM core spans 81–299 (WTHGTLTVMI…EAWGYELGFR (219 aa)).

Belongs to the radical SAM superfamily. Lipoyl synthase family. [4Fe-4S] cluster serves as cofactor.

The protein localises to the cytoplasm. The catalysed reaction is [[Fe-S] cluster scaffold protein carrying a second [4Fe-4S](2+) cluster] + N(6)-octanoyl-L-lysyl-[protein] + 2 oxidized [2Fe-2S]-[ferredoxin] + 2 S-adenosyl-L-methionine + 4 H(+) = [[Fe-S] cluster scaffold protein] + N(6)-[(R)-dihydrolipoyl]-L-lysyl-[protein] + 4 Fe(3+) + 2 hydrogen sulfide + 2 5'-deoxyadenosine + 2 L-methionine + 2 reduced [2Fe-2S]-[ferredoxin]. It functions in the pathway protein modification; protein lipoylation via endogenous pathway; protein N(6)-(lipoyl)lysine from octanoyl-[acyl-carrier-protein]: step 2/2. Catalyzes the radical-mediated insertion of two sulfur atoms into the C-6 and C-8 positions of the octanoyl moiety bound to the lipoyl domains of lipoate-dependent enzymes, thereby converting the octanoylated domains into lipoylated derivatives. The chain is Lipoyl synthase from Thermus thermophilus (strain ATCC 27634 / DSM 579 / HB8).